The sequence spans 233 residues: Purine nucleoside phosphorylase DeoD-type (233 aa).

Histidine 4 is an a purine D-ribonucleoside binding site. Residues glycine 20, arginine 24, arginine 43, and 87 to 90 contribute to the phosphate site; that span reads RIGT. Residues 179-181 and 203-204 each bind a purine D-ribonucleoside; these read EME and SD. The active-site Proton donor is aspartate 204.

The protein belongs to the PNP/UDP phosphorylase family. As to quaternary structure, homohexamer; trimer of homodimers.

It catalyses the reaction a purine D-ribonucleoside + phosphate = a purine nucleobase + alpha-D-ribose 1-phosphate. The enzyme catalyses a purine 2'-deoxy-D-ribonucleoside + phosphate = a purine nucleobase + 2-deoxy-alpha-D-ribose 1-phosphate. Catalyzes the reversible phosphorolytic breakdown of the N-glycosidic bond in the beta-(deoxy)ribonucleoside molecules, with the formation of the corresponding free purine bases and pentose-1-phosphate. This is Purine nucleoside phosphorylase DeoD-type from Helicobacter pylori (strain P12).